Here is a 298-residue protein sequence, read N- to C-terminus: Protoheme IX farnesyltransferase (298 aa).

Helical transmembrane passes span 24-44 (VIQL…PGLP), 49-69 (LQLA…AAAF), 100-120 (LLFS…WVNP), 121-141 (LTMW…TVIL), 149-169 (IVIG…AMAG), 175-195 (ALIL…ALAL), 220-240 (LMVL…YVYG), 244-264 (WLYL…AFYL), and 277-297 (FRFS…DHYL).

This sequence belongs to the UbiA prenyltransferase family. Protoheme IX farnesyltransferase subfamily.

The protein resides in the cell inner membrane. It carries out the reaction heme b + (2E,6E)-farnesyl diphosphate + H2O = Fe(II)-heme o + diphosphate. It functions in the pathway porphyrin-containing compound metabolism; heme O biosynthesis; heme O from protoheme: step 1/1. Functionally, converts heme B (protoheme IX) to heme O by substitution of the vinyl group on carbon 2 of heme B porphyrin ring with a hydroxyethyl farnesyl side group. The protein is Protoheme IX farnesyltransferase of Albidiferax ferrireducens (strain ATCC BAA-621 / DSM 15236 / T118) (Rhodoferax ferrireducens).